The sequence spans 213 residues: Guanylate kinase (213 aa).

The Guanylate kinase-like domain maps to Gly-10 to His-189. Position 17 to 24 (Ala-17 to Thr-24) interacts with ATP.

It belongs to the guanylate kinase family.

The protein localises to the cytoplasm. It catalyses the reaction GMP + ATP = GDP + ADP. In terms of biological role, essential for recycling GMP and indirectly, cGMP. The sequence is that of Guanylate kinase (gmk) from Caulobacter vibrioides (strain ATCC 19089 / CIP 103742 / CB 15) (Caulobacter crescentus).